The following is a 600-amino-acid chain: Aspartate--tRNA(Asp/Asn) ligase (600 aa).

Glutamate 174 contacts L-aspartate. The aspartate stretch occupies residues 198 to 201 (QLFK). Arginine 220 lines the L-aspartate pocket. ATP-binding positions include 220 to 222 (RDE) and glutamine 229. L-aspartate is bound at residue histidine 457. Glutamate 491 provides a ligand contact to ATP. An L-aspartate-binding site is contributed by arginine 498. 543–546 (GLDR) provides a ligand contact to ATP.

Belongs to the class-II aminoacyl-tRNA synthetase family. Type 1 subfamily. As to quaternary structure, homodimer.

The protein localises to the cytoplasm. The catalysed reaction is tRNA(Asx) + L-aspartate + ATP = L-aspartyl-tRNA(Asx) + AMP + diphosphate. Aspartyl-tRNA synthetase with relaxed tRNA specificity since it is able to aspartylate not only its cognate tRNA(Asp) but also tRNA(Asn). Reaction proceeds in two steps: L-aspartate is first activated by ATP to form Asp-AMP and then transferred to the acceptor end of tRNA(Asp/Asn). In Burkholderia mallei (strain NCTC 10247), this protein is Aspartate--tRNA(Asp/Asn) ligase.